The chain runs to 134 residues: DNA-directed RNA polymerase subunit omega (134 aa).

It belongs to the RNA polymerase subunit omega family. In terms of assembly, the RNAP catalytic core consists of 2 alpha, 1 beta, 1 beta' and 1 omega subunit. When a sigma factor is associated with the core the holoenzyme is formed, which can initiate transcription.

The catalysed reaction is RNA(n) + a ribonucleoside 5'-triphosphate = RNA(n+1) + diphosphate. Promotes RNA polymerase assembly. Latches the N- and C-terminal regions of the beta' subunit thereby facilitating its interaction with the beta and alpha subunits. The protein is DNA-directed RNA polymerase subunit omega of Rhizobium etli (strain CIAT 652).